The chain runs to 170 residues: UPF0251 protein MA_1017 (170 aa).

It belongs to the UPF0251 family.

This Methanosarcina acetivorans (strain ATCC 35395 / DSM 2834 / JCM 12185 / C2A) protein is UPF0251 protein MA_1017.